Reading from the N-terminus, the 237-residue chain is Probable transcriptional regulatory protein Exig_1693 (237 aa).

It belongs to the TACO1 family. YeeN subfamily.

The protein resides in the cytoplasm. The sequence is that of Probable transcriptional regulatory protein Exig_1693 from Exiguobacterium sibiricum (strain DSM 17290 / CCUG 55495 / CIP 109462 / JCM 13490 / 255-15).